Reading from the N-terminus, the 250-residue chain is Protein KPLCE (250 aa).

In terms of tissue distribution, skin-specific.

This Homo sapiens (Human) protein is Protein KPLCE.